Reading from the N-terminus, the 482-residue chain is GTPase Der (482 aa).

EngA-type G domains are found at residues Pro-3–Phe-166 and Ile-195–Thr-368. GTP-binding positions include Gly-9–Ser-16, Asp-56–Ile-60, Asn-118–Asp-121, Gly-201–Ser-208, Asp-248–Val-252, and Asn-313–Asp-316. In terms of domain architecture, KH-like spans Lys-369–Ala-453.

Belongs to the TRAFAC class TrmE-Era-EngA-EngB-Septin-like GTPase superfamily. EngA (Der) GTPase family. In terms of assembly, associates with the 50S ribosomal subunit.

In terms of biological role, GTPase that plays an essential role in the late steps of ribosome biogenesis. This chain is GTPase Der, found in Pseudoalteromonas atlantica (strain T6c / ATCC BAA-1087).